A 546-amino-acid polypeptide reads, in one-letter code: MGEVAKEEVEERRSIVAVNPQPSKGLVSSAVDLIEKAVVYLFHDKSKPCHYLSGNFAPVVDETPPCPDLPVRGHLPECLNGEFVRVGPNPKFMPVAGYHWFDGDGMIHGMRIKDGKATYASRYVKTSRLKQEEYFEGPKFMKIGDLKGFFGLFMVQMQLLRAKLKVIDVSYGVGTGNTALIYHHGKLLALSEADKPYVVKVLEDGDLQTLGLLDYDKRLSHSFTAHPKVDPFTDEMFTFGYAHTPPYVTYRVISKDGVMRDPVPITIPASVMMHDFAITENYSIFMDLPLYFQPKEMVKGGKLIFSFDATKKARFGVLPRYAKDDSLIRWFELPNCFIFHNANAWEEGDEVVLITCRLENPDLDMVNGAVKEKLENFKNELYEMRFNMKTGAASQKQLSVSAVDFPRINESYTTRKQRYVYGTILDNITKVKGIIKFDLHAEPEAGKKKLEVGGNVQGIFDLGPGRYGSEAVFVPRERGIKSEEDDGYLIFFVHDENTGKSEVNVIDAKTMSAEPVAVVELPNRVPYGFHAFFVNEEQLQWQQTDV.

Residues histidine 226, histidine 274, histidine 340, and histidine 530 each coordinate Fe cation.

This sequence belongs to the carotenoid oxygenase family. Requires Fe(2+) as cofactor. In terms of tissue distribution, in vegetative and floral tissues.

Its subcellular location is the cytoplasm. The catalysed reaction is all-trans-zeaxanthin + 2 O2 = 4,9-dimethyldodeca-2,4,6,8,10-pentaenedial + 2 (3R)-hydroxy-beta-ionone. Functionally, cleaves a variety of carotenoids symmetrically at both the 9-10 and 9'-10' double bonds. Catalyzes the formation of 4,9-dimethyldodeca-2,4,6,8,10-pentaene-1,12-dialdehyde and probably hydroxydihydro-beta-ionone from zeaxanthin. The sequence is that of Carotenoid 9,10(9',10')-cleavage dioxygenase (CCD) from Crocus sativus (Saffron).